Reading from the N-terminus, the 511-residue chain is Glucose-6-phosphate 1-dehydrogenase, cytoplasmic isoform (511 aa).

NADP(+) is bound by residues 36–43 (GASGDLAK), arginine 71, tyrosine 151, and lysine 178. D-glucose 6-phosphate contacts are provided by residues lysine 178, 208–212 (HYLGK), glutamate 246, and aspartate 265. The active-site Proton acceptor is histidine 270. An NADP(+)-binding site is contributed by lysine 353. 2 residues coordinate D-glucose 6-phosphate: lysine 356 and arginine 361. NADP(+)-binding residues include lysine 362, arginine 366, and arginine 390. Position 392 (glutamine 392) interacts with D-glucose 6-phosphate. NADP(+)-binding positions include 398-400 (YMK), 418-420 (DLS), arginine 484, and tryptophan 506.

This sequence belongs to the glucose-6-phosphate dehydrogenase family. As to quaternary structure, homotetramer. As to expression, found in tubers, stolons, roots, and flower buds.

It localises to the cytoplasm. It catalyses the reaction D-glucose 6-phosphate + NADP(+) = 6-phospho-D-glucono-1,5-lactone + NADPH + H(+). It participates in carbohydrate degradation; pentose phosphate pathway; D-ribulose 5-phosphate from D-glucose 6-phosphate (oxidative stage): step 1/3. With respect to regulation, regulated by metabolites. In terms of biological role, catalyzes the rate-limiting step of the oxidative pentose-phosphate pathway, which represents a route for the dissimilation of carbohydrates besides glycolysis. The main function of this enzyme is to generate NADPH for reductive biosyntheses. The sequence is that of Glucose-6-phosphate 1-dehydrogenase, cytoplasmic isoform (G6PDH) from Solanum tuberosum (Potato).